The chain runs to 216 residues: 3-keto-L-gulonate-6-phosphate decarboxylase UlaD (216 aa).

Aspartate 11 provides a ligand contact to substrate. Mg(2+) contacts are provided by glutamate 33 and aspartate 62. Arginine 192 provides a ligand contact to substrate.

The protein belongs to the HPS/KGPDC family. KGPDC subfamily. Homodimer. Mg(2+) serves as cofactor.

The catalysed reaction is 3-dehydro-L-gulonate 6-phosphate + H(+) = L-xylulose 5-phosphate + CO2. It participates in cofactor degradation; L-ascorbate degradation; D-xylulose 5-phosphate from L-ascorbate: step 2/4. Functionally, catalyzes the decarboxylation of 3-keto-L-gulonate-6-P into L-xylulose-5-P. Is involved in the anaerobic L-ascorbate utilization. This is 3-keto-L-gulonate-6-phosphate decarboxylase UlaD from Escherichia coli O17:K52:H18 (strain UMN026 / ExPEC).